The following is a 114-amino-acid chain: Probable gas vesicle protein J2 (114 aa).

Basic and acidic residues predominate over residues 1–10 (MTDLDHRYPG). Residues 1-21 (MTDLDHRYPGEETEPYGPPSG) are disordered.

This sequence belongs to the gas vesicle GvpA family. As to quaternary structure, interacts with GvpA.

It is found in the gas vesicle. In terms of biological role, a minor component of the gas vesicle, might be involved in nucleating gas vesicle formation. Gas vesicles (GV) are hollow, gas filled proteinaceous nanostructures. It is not clear what function GVs perform in soil bacteria. This Streptomyces coelicolor (strain ATCC BAA-471 / A3(2) / M145) protein is Probable gas vesicle protein J2.